We begin with the raw amino-acid sequence, 307 residues long: MFWFDAVLLGVLEGLTEFLPVSSTGHLILLGAWLGHQSEAAKTLDIVIQLGAVLAVVVYFRERLSTTVRGMVRRDPDSLRLALALAFAFLPAAVVGLLFHKAIKAHLFGPGPVAAALIVGGFLMIGVESLRRRRPDQGAPRVEDVTFQRALAIGFAQCFSLWPGASRSMTTIVGGQLSGLSTAAAAEFSFLLAIPTLGAATVFDLVKNGRALLDAPGGIVALVVGLAVSFAVALLVIAVFLRYLKRYGLAPFGWYRIALGALVLWLWIASRSAPAEAGAASASPAPRGDVAAAVDGLARTGDHPSRP.

Helical transmembrane passes span alanine 40 to phenylalanine 60, leucine 79 to phenylalanine 99, leucine 107 to valine 127, alanine 183 to phenylalanine 203, isoleucine 219 to valine 239, and leucine 249 to alanine 269.

It belongs to the UppP family.

The protein localises to the cell inner membrane. It carries out the reaction di-trans,octa-cis-undecaprenyl diphosphate + H2O = di-trans,octa-cis-undecaprenyl phosphate + phosphate + H(+). Catalyzes the dephosphorylation of undecaprenyl diphosphate (UPP). Confers resistance to bacitracin. The polypeptide is Undecaprenyl-diphosphatase (Sorangium cellulosum (strain So ce56) (Polyangium cellulosum (strain So ce56))).